The sequence spans 429 residues: tRNA (guanine(9)-N1)-methyltransferase (429 aa).

The region spanning 131–379 is the SAM-dependent MTase TRM10-type domain; sequence KERKEAQRRI…AVIPIRKYAP (249 aa). Residues 285-286, glycine 305, 309-313, cysteine 317, leucine 331, and 344-346 contribute to the S-adenosyl-L-methionine site; these read LS, DRNRH, and KAL. Aspartate 309 (proton acceptor) is an active-site residue. The tract at residues 383-429 is disordered; sequence AKRAKTETKRNEKVEEEVECTSAEGEEDIGVIEESAEVDPEDVFSNQ. Residues 386–395 show a composition bias toward basic and acidic residues; that stretch reads AKTETKRNEK. The segment covering 396 to 429 has biased composition (acidic residues); sequence VEEEVECTSAEGEEDIGVIEESAEVDPEDVFSNQ.

It belongs to the class IV-like SAM-binding methyltransferase superfamily. TRM10 family. As to quaternary structure, monomer.

It is found in the cytoplasm. Its subcellular location is the nucleus. The catalysed reaction is guanosine(9) in tRNA + S-adenosyl-L-methionine = N(1)-methylguanosine(9) in tRNA + S-adenosyl-L-homocysteine + H(+). S-adenosyl-L-methionine-dependent guanine N(1)-methyltransferase that catalyzes the formation of N(1)-methylguanine at position 9 (m1G9) in cytoplasmic tRNA. The polypeptide is tRNA (guanine(9)-N1)-methyltransferase (Cryptococcus neoformans var. neoformans serotype D (strain B-3501A) (Filobasidiella neoformans)).